The sequence spans 114 residues: Amphinase-4 (114 aa).

The active-site Proton acceptor is His-15. 4 disulfides stabilise this stretch: Cys-26–Cys-79, Cys-41–Cys-85, Cys-59–Cys-100, and Cys-97–Cys-114. Asn-27 carries an N-linked (GlcNAc...) asparagine glycan. Lys-42 to Thr-46 is a binding site for substrate. N-linked (GlcNAc...) asparagine glycans are attached at residues Asn-67 and Asn-91. The active-site Proton donor is His-107.

The protein belongs to the pancreatic ribonuclease family. As to quaternary structure, monomer. In terms of processing, there are at least five different forms arising from glycan heterogeneity.

The protein resides in the secreted. Its function is as follows. Endonuclease, hydrolyzes highly polymerized RNA, poly(U) and poly(C), and the dinucleotides CpA and UpA. Hydrolyzes rCA, rUA and rUG. Has cytotoxic activity against cultured human submaxillary gland carcinoma cells. This is Amphinase-4 from Lithobates pipiens (Northern leopard frog).